The primary structure comprises 334 residues: Thiamine-binding periplasmic protein (334 aa).

A signal peptide spans 1-23 (MRLLSLLTFSLFAVIGLAPAAQA). Residues 64–65 (DG), 166–167 (AT), Trp202, and 220–223 (YTTS) each bind thiamine.

It belongs to the bacterial solute-binding protein 1 family. In terms of assembly, the complex is composed of two ATP-binding proteins (ThiQ), two transmembrane proteins (ThiP) and a solute-binding protein (ThiB).

It localises to the periplasm. Its function is as follows. Part of the ABC transporter complex ThiBPQ involved in thiamine import. This chain is Thiamine-binding periplasmic protein (thiB), found in Brucella suis biovar 1 (strain 1330).